Here is a 90-residue protein sequence, read N- to C-terminus: Probable Fe(2+)-trafficking protein (90 aa).

This sequence belongs to the Fe(2+)-trafficking protein family.

Could be a mediator in iron transactions between iron acquisition and iron-requiring processes, such as synthesis and/or repair of Fe-S clusters in biosynthetic enzymes. This is Probable Fe(2+)-trafficking protein from Azotobacter vinelandii (strain DJ / ATCC BAA-1303).